The sequence spans 359 residues: DNA polymerase IV (359 aa).

The UmuC domain occupies 4-184 (IVHVDMDAFY…LKVNRIPGVG (181 aa)). Residues Asp-8 and Asp-102 each coordinate Mg(2+). Glu-103 is a catalytic residue.

Belongs to the DNA polymerase type-Y family. As to quaternary structure, monomer. Requires Mg(2+) as cofactor.

The protein localises to the cytoplasm. The catalysed reaction is DNA(n) + a 2'-deoxyribonucleoside 5'-triphosphate = DNA(n+1) + diphosphate. Poorly processive, error-prone DNA polymerase involved in untargeted mutagenesis. Copies undamaged DNA at stalled replication forks, which arise in vivo from mismatched or misaligned primer ends. These misaligned primers can be extended by PolIV. Exhibits no 3'-5' exonuclease (proofreading) activity. May be involved in translesional synthesis, in conjunction with the beta clamp from PolIII. The polypeptide is DNA polymerase IV (Xanthomonas euvesicatoria pv. vesicatoria (strain 85-10) (Xanthomonas campestris pv. vesicatoria)).